A 170-amino-acid chain; its full sequence is ATP synthase subunit b (170 aa).

A helical transmembrane segment spans residues 30–50 (FFFVLAIFLVVLAVIGTFVVP).

Belongs to the ATPase B chain family. F-type ATPases have 2 components, F(1) - the catalytic core - and F(0) - the membrane proton channel. F(1) has five subunits: alpha(3), beta(3), gamma(1), delta(1), epsilon(1). F(0) has three main subunits: a(1), b(2) and c(10-14). The alpha and beta chains form an alternating ring which encloses part of the gamma chain. F(1) is attached to F(0) by a central stalk formed by the gamma and epsilon chains, while a peripheral stalk is formed by the delta and b chains.

The protein localises to the cell membrane. Its function is as follows. F(1)F(0) ATP synthase produces ATP from ADP in the presence of a proton or sodium gradient. F-type ATPases consist of two structural domains, F(1) containing the extramembraneous catalytic core and F(0) containing the membrane proton channel, linked together by a central stalk and a peripheral stalk. During catalysis, ATP synthesis in the catalytic domain of F(1) is coupled via a rotary mechanism of the central stalk subunits to proton translocation. Component of the F(0) channel, it forms part of the peripheral stalk, linking F(1) to F(0). The protein is ATP synthase subunit b of Mycobacterium ulcerans (strain Agy99).